Here is a 475-residue protein sequence, read N- to C-terminus: Ankyrin repeat, SAM and basic leucine zipper domain-containing protein 1 (475 aa).

The interval 1–38 (MATGSLRGLAVAGGGESSDSEDDGWEIGYLDRPPQKLK) is disordered. Phosphoserine occurs at positions 17, 18, and 20. ANK repeat units lie at residues 45–74 (EKNETFKKALTTGDTSLVKELLDSGISVDS), 78–107 (YGWTPLMYAASVANVELVRVLLDRGANASF), 110–144 (DKQTILITACSARGSEEQILKCVELLLSRNADPNV), 148–177 (RLMTPIMYAARDGHPQVVALLVAHGAEVNI), 181–210 (NGYTALTWAARQGHKSVVLKLLELGANKTL), and 214–243 (DGKTPSEIAKRNKHLEIFNLLSLTLNPLEG). In terms of domain architecture, SAM spans 272–334 (SYTAFGDLEI…KILAALKELE (63 aa)).

In terms of assembly, interacts with DDX4, PIWIL1, RANBP9 and TDRD1.

It is found in the cytoplasm. Its function is as follows. Plays a central role during spermatogenesis by repressing transposable elements and preventing their mobilization, which is essential for the germline integrity. Acts via the piRNA metabolic process, which mediates the repression of transposable elements during meiosis by forming complexes composed of piRNAs and Piwi proteins and governs the methylation and subsequent repression of transposons. Its association with pi-bodies suggests a participation in the primary piRNAs metabolic process. Required prior to the pachytene stage to facilitate the production of multiple types of piRNAs, including those associated with repeats involved in the regulation of retrotransposons. May act by mediating protein-protein interactions during germ cell maturation. This Oryctolagus cuniculus (Rabbit) protein is Ankyrin repeat, SAM and basic leucine zipper domain-containing protein 1 (ASZ1).